The following is a 60-amino-acid chain: Large ribosomal subunit protein bL32 (60 aa).

Belongs to the bacterial ribosomal protein bL32 family.

The polypeptide is Large ribosomal subunit protein bL32 (Borreliella afzelii (strain PKo) (Borrelia afzelii)).